Here is a 677-residue protein sequence, read N- to C-terminus: UPF0652 protein (677 aa).

The B box-type; atypical zinc finger occupies 38–84 (ETPGMCCECTDQPAEVVCLQCQDELCTVCSTSLHRRGSRRSHIFKNK). Positions 43, 46, 66, and 71 each coordinate Zn(2+). A compositionally biased stretch (basic and acidic residues) spans 91–111 (YDELNKRDRQPPLHGKEDEKV). Disordered stretches follow at residues 91-142 (YDEL…NNNI) and 156-192 (LNPL…IDED). Positions 113–126 (NNNNNNNNTNNTNN) are enriched in low complexity. Positions 163–178 (HTNQQRNGGGSNNHQI) are enriched in polar residues.

Belongs to the UPF0652 family.

This is UPF0652 protein from Dictyostelium discoideum (Social amoeba).